We begin with the raw amino-acid sequence, 188 residues long: Peptidyl-tRNA hydrolase (188 aa).

A tRNA-binding site is contributed by Tyr15. Catalysis depends on His20, which acts as the Proton acceptor. Residues Phe66, Asn68, and Asn114 each coordinate tRNA.

This sequence belongs to the PTH family. Monomer.

Its subcellular location is the cytoplasm. The enzyme catalyses an N-acyl-L-alpha-aminoacyl-tRNA + H2O = an N-acyl-L-amino acid + a tRNA + H(+). Its function is as follows. Hydrolyzes ribosome-free peptidyl-tRNAs (with 1 or more amino acids incorporated), which drop off the ribosome during protein synthesis, or as a result of ribosome stalling. In terms of biological role, catalyzes the release of premature peptidyl moieties from peptidyl-tRNA molecules trapped in stalled 50S ribosomal subunits, and thus maintains levels of free tRNAs and 50S ribosomes. The protein is Peptidyl-tRNA hydrolase of Lactococcus lactis subsp. cremoris (strain MG1363).